We begin with the raw amino-acid sequence, 645 residues long: Protein disulfide-isomerase A4 (645 aa).

A signal peptide spans 1–20 (MRPRKAFLLLLLLGLVQLLA). Thioredoxin domains lie at 21-169 (VAGA…EVSQ) and 158-301 (EEIV…EFLK). Positions 24–58 (AEGPDEDSSNRENAIEDEEEEEEEDDDEEEDDLEV) are disordered. The span at 38–58 (IEDEEEEEEEDDDEEEDDLEV) shows a compositional bias: acidic residues. The CXXC signature appears at 91-94 (CGHC). Cystine bridges form between cysteine 91–cysteine 94 and cysteine 206–cysteine 209. Lysine 366 carries the post-translational modification N6-acetyllysine. The 132-residue stretch at 505-636 (FKKGKLKPVI…LSKFIEEHAT (132 aa)) folds into the Thioredoxin 3 domain. A CXXC motif is present at residues 555–558 (CGHC). Cysteine 555 and cysteine 558 are joined by a disulfide. A Prevents secretion from ER motif is present at residues 642 to 645 (KEEL).

The protein belongs to the protein disulfide isomerase family. In terms of assembly, part of a large chaperone multiprotein complex comprising DNAJB11, HSP90B1, HSPA5, HYOU, PDIA2, PDIA4, PDIA6, PPIB, SDF2L1, UGGT1 and very small amounts of ERP29, but not, or at very low levels, CALR nor CANX. Component of a complex containing at least CRELD2, MANF, MATN3 and PDIA4. (Microbial infection) Interacts with Human astrovirus-1 and Human astrovirus-8 spike protein VP25; this interaction seems to facilitate the uncoating during virus entry into the cell. Does not interact with Human astrovirus-2 spike protein VP25.

It localises to the endoplasmic reticulum lumen. Its subcellular location is the melanosome. The catalysed reaction is Catalyzes the rearrangement of -S-S- bonds in proteins.. The protein is Protein disulfide-isomerase A4 (PDIA4) of Homo sapiens (Human).